A 218-amino-acid chain; its full sequence is Protein N-lysine methyltransferase METTL21A (218 aa).

S-adenosyl-L-methionine contacts are provided by residues Trp47, 73–75 (GAG), Asp94, Trp125, and Ala143.

Belongs to the methyltransferase superfamily. METTL21 family. As to quaternary structure, interacts with heat shock protein 70 family members; at least some of these proteins are methylation substrates.

Its subcellular location is the cytoplasm. It catalyses the reaction L-lysyl-[protein] + 3 S-adenosyl-L-methionine = N(6),N(6),N(6)-trimethyl-L-lysyl-[protein] + 3 S-adenosyl-L-homocysteine + 3 H(+). Functionally, protein-lysine methyltransferase that selectively trimethylates residues in heat shock protein 70 (HSP70) family members. Contributes to the in vivo trimethylation of Lys residues in HSPA1 and HSPA8. In vitro methylates 'Lys-561' in HSPA1, 'Lys-564' in HSPA2, 'Lys-585' in HSPA5, 'Lys-563' in HSPA6 and 'Lys-561' in HSPA8. In Homo sapiens (Human), this protein is Protein N-lysine methyltransferase METTL21A (METTL21A).